An 834-amino-acid chain; its full sequence is Translation initiation factor IF-2 (834 aa).

The disordered stretch occupies residues 1–247 (MTEEKKFSGS…STPATVRKEQ (247 aa)). A compositionally biased stretch (low complexity) spans 45-101 (GGSRPSRPARPNNNNQNRPNNGGQSQNRNNQNRSNTSTGGQNRSNNGGNRNNRPGSR). Positions 109–125 (PMIREKKNWSTKPREGQ) are enriched in basic and acidic residues. Low complexity-rich tracts occupy residues 149–165 (ASAA…ATKP) and 173–201 (ATKP…SARN). The span at 224 to 233 (GSKKSRRIAA) shows a compositional bias: basic residues. One can recognise a tr-type G domain in the interval 335–504 (SRPPVVTIMG…LLQAEVLELK (170 aa)). The tract at residues 344-351 (GHVDHGKT) is G1. 344-351 (GHVDHGKT) contacts GTP. Positions 369 to 373 (GITQH) are G2. The segment at 390–393 (DTPG) is G3. GTP-binding positions include 390–394 (DTPGH) and 444–447 (NKID). Residues 444 to 447 (NKID) form a G4 region. Positions 480–482 (SAK) are G5.

It belongs to the TRAFAC class translation factor GTPase superfamily. Classic translation factor GTPase family. IF-2 subfamily.

The protein resides in the cytoplasm. Functionally, one of the essential components for the initiation of protein synthesis. Protects formylmethionyl-tRNA from spontaneous hydrolysis and promotes its binding to the 30S ribosomal subunits. Also involved in the hydrolysis of GTP during the formation of the 70S ribosomal complex. The chain is Translation initiation factor IF-2 from Leuconostoc mesenteroides subsp. mesenteroides (strain ATCC 8293 / DSM 20343 / BCRC 11652 / CCM 1803 / JCM 6124 / NCDO 523 / NBRC 100496 / NCIMB 8023 / NCTC 12954 / NRRL B-1118 / 37Y).